Consider the following 263-residue polypeptide: Aquaporin Lacbi1:233199 (263 aa).

Over 1 to 17 (MFTLAHHRHAIRKPMAE) the chain is Cytoplasmic. A helical membrane pass occupies residues 18–38 (FFGVALLVIFGAGAACQVVLS). The Extracellular segment spans residues 39–44 (TNPNSF). A helical transmembrane segment spans residues 45–65 (LSINFGWAIGIAMGAWISGSI). Over 66–88 (SGGHINPAITIAMATYRGFPWRE) the chain is Cytoplasmic. An NPA 1 motif is present at residues 71–73 (NPA). The chain crosses the membrane as a helical span at residues 89–109 (VPSYILAQVLGGVVGAALVYA). The Extracellular segment spans residues 110-143 (NYIHAIDVFEGGRHIRTQATASLFATYALPYMTQ). A helical membrane pass occupies residues 144–164 (VSCFFSEFLATAVLAMMVLAL). Residues 165 to 174 (TDNRNGAPTN) lie on the Cytoplasmic side of the membrane. Residues 175 to 195 (GLSPFALFVLFIGLGASLGME) form a helical membrane-spanning segment. Topologically, residues 196–227 (TAYALNPARDFGPRLFLAMAGYGKALFNYRSQ) are extracellular. Residues 201–203 (NPA) carry the NPA 2 motif. Residues 228–248 (YWLWAPIIAPVLGAQAGGLLY) form a helical membrane-spanning segment. The Cytoplasmic segment spans residues 249–263 (DTFLYDGDDSPIKWR).

The protein belongs to the MIP/aquaporin (TC 1.A.8) family.

It is found in the membrane. The catalysed reaction is H2O(in) = H2O(out). Probable water channel required to facilitate the transport of water across membranes. This is Aquaporin Lacbi1:233199 from Laccaria bicolor (strain S238N-H82 / ATCC MYA-4686) (Bicoloured deceiver).